Consider the following 157-residue polypeptide: 2-C-methyl-D-erythritol 2,4-cyclodiphosphate synthase (157 aa).

Positions 8 and 10 each coordinate a divalent metal cation. 4-CDP-2-C-methyl-D-erythritol 2-phosphate-binding positions include 8 to 10 (DVH) and 34 to 35 (HS). Position 42 (histidine 42) interacts with a divalent metal cation. 4-CDP-2-C-methyl-D-erythritol 2-phosphate is bound by residues 56 to 58 (DIG), 132 to 135 (TTNE), and arginine 142.

This sequence belongs to the IspF family. In terms of assembly, homotrimer. A divalent metal cation serves as cofactor.

It catalyses the reaction 4-CDP-2-C-methyl-D-erythritol 2-phosphate = 2-C-methyl-D-erythritol 2,4-cyclic diphosphate + CMP. Its pathway is isoprenoid biosynthesis; isopentenyl diphosphate biosynthesis via DXP pathway; isopentenyl diphosphate from 1-deoxy-D-xylulose 5-phosphate: step 4/6. Functionally, involved in the biosynthesis of isopentenyl diphosphate (IPP) and dimethylallyl diphosphate (DMAPP), two major building blocks of isoprenoid compounds. Catalyzes the conversion of 4-diphosphocytidyl-2-C-methyl-D-erythritol 2-phosphate (CDP-ME2P) to 2-C-methyl-D-erythritol 2,4-cyclodiphosphate (ME-CPP) with a corresponding release of cytidine 5-monophosphate (CMP). In Prosthecochloris aestuarii (strain DSM 271 / SK 413), this protein is 2-C-methyl-D-erythritol 2,4-cyclodiphosphate synthase.